A 32-amino-acid chain; its full sequence is MSDIN-like toxin proprotein a (32 aa).

Residues 1–10 (MSDINATRLP) constitute a propeptide that is removed on maturation. A cross-link (cyclopeptide (Ile-Pro)) is located at residues 11-18 (IIGILLPP). Residues 19 to 32 (CIGDDVTLLLTRGE) constitute a propeptide that is removed on maturation.

This sequence belongs to the MSDIN fungal toxin family. In terms of processing, processed by the macrocyclase-peptidase enzyme POPB to yield a toxic cyclic octapeptide. POPB first removes 10 residues from the N-terminus. Conformational trapping of the remaining peptide forces the enzyme to release this intermediate rather than proceed to macrocyclization. The enzyme rebinds the remaining peptide in a different conformation and catalyzes macrocyclization of the N-terminal 8 residues.

In terms of biological role, probable toxin that belongs to the MSDIN-like toxin family responsible for a large number of food poisoning cases and deaths. This chain is MSDIN-like toxin proprotein a, found in Amanita phalloides (Death cap).